The sequence spans 87 residues: uncharacterized protein (87 aa).

Residues 13–33 form a helical membrane-spanning segment; that stretch reads LMIVSAVFGGIGIITTIVFVI. The disordered stretch occupies residues 66-87; it reads EECGGSTETSSSKPKKKAKKEV. Basic residues predominate over residues 78 to 87; it reads KPKKKAKKEV.

The protein localises to the membrane. This is an uncharacterized protein from Caenorhabditis elegans.